The chain runs to 233 residues: Ribitol-5-phosphate cytidylyltransferase (233 aa).

CTP is bound by residues 7–10 (LAGG) and 80–86 (GADRNET).

The protein belongs to the IspD/TarI cytidylyltransferase family. TarI subfamily.

It catalyses the reaction D-ribitol 5-phosphate + CTP + H(+) = CDP-L-ribitol + diphosphate. Its pathway is cell wall biogenesis; poly(ribitol phosphate) teichoic acid biosynthesis. Its function is as follows. Catalyzes the transfer of the cytidylyl group of CTP to D-ribitol 5-phosphate. The polypeptide is Ribitol-5-phosphate cytidylyltransferase (Lactiplantibacillus plantarum (strain ATCC BAA-793 / NCIMB 8826 / WCFS1) (Lactobacillus plantarum)).